The sequence spans 852 residues: DNA mismatch repair protein MutS (852 aa).

Position 602–609 (602–609 (GPNMSGKS)) interacts with ATP.

Belongs to the DNA mismatch repair MutS family.

Its function is as follows. This protein is involved in the repair of mismatches in DNA. It is possible that it carries out the mismatch recognition step. This protein has a weak ATPase activity. This Streptococcus thermophilus (strain ATCC BAA-250 / LMG 18311) protein is DNA mismatch repair protein MutS.